Here is a 146-residue protein sequence, read N- to C-terminus: Angiogenin (146 aa).

An N-terminal signal peptide occupies residues 1 to 24 (MVMGLGLFLLVFMLGLGLTSPTLA). At Gln25 the chain carries Pyrrolidone carboxylic acid. His37 serves as the catalytic Proton acceptor. Arg45 is a tRNA binding site. Cystine bridges form between Cys50–Cys105, Cys63–Cys116, and Cys81–Cys131. The short motif at 55 to 59 (RRQGM) is the Nucleolar localization signal element. Residues Cys105 and Ile127 each coordinate tRNA. The Proton donor role is filled by His138.

It belongs to the pancreatic ribonuclease family. In terms of assembly, homodimer. Interacts with RNH1; inhibiting ANG ribonuclease activity. Interacts with PCNA.

The protein localises to the secreted. It localises to the nucleus. Its subcellular location is the nucleolus. It is found in the cytoplasm. The protein resides in the stress granule. With respect to regulation, has weak tRNA ribonuclease activity by itself due to partial autoinhibition by its C-terminus, which folds into a short alpha-helix that partially occludes the substrate-binding site. In absence of stress, the ribonuclease activity is inhibited by RNH1 in the cytoplasm. In response to stress, dissociates from RNH1 in the cytoplasm and associates with cytoplasmic ribosomes with vacant A-sites: ribosomes directly activate the tRNA ribonuclease activity of ANG by refolding the C-terminal alpha-helix. In response to stress, the angiogenic activity of ANG is inhibited by RNH1 in the nucleus. Functionally, secreted ribonuclease that can either promote or restrict cell proliferation of target cells, depending on the context. Endocytosed in target cells via its receptor PLXNB2 and translocates to the cytoplasm or nucleus. Under stress conditions, localizes to the cytoplasm and promotes the assembly of stress granules (SGs): specifically cleaves a subset of tRNAs within anticodon loops to produce tRNA-derived stress-induced fragments (tiRNAs), resulting in translation repression and inhibition of cell proliferation. tiRNas also prevent formation of apoptosome, thereby promoting cell survival. Preferentially cleaves RNAs between a pyrimidine and an adenosine residue, suggesting that it cleaves the anticodon loop of tRNA(Ala) (32-UUAGCAU-38) after positions 33 and 36. Cleaves a subset of tRNAs, including tRNA(Ala), tRNA(Glu), tRNA(Gly), tRNA(Lys), tRNA(Val), tRNA(His), tRNA(Asp) and tRNA(Sec). Under growth conditions and in differentiated cells, translocates to the nucleus and stimulates ribosomal RNA (rRNA) transcription, including that containing the initiation site sequences of 45S rRNA, thereby promoting cell growth and proliferation. Angiogenin induces vascularization of normal and malignant tissues via its ability to promote rRNA transcription. Involved in hematopoietic stem and progenitor cell (HSPC) growth and survival by promoting rRNA transcription in growth conditions and inhibiting translation in response to stress, respectively. Mediates the crosstalk between myeloid and intestinal epithelial cells to protect the intestinal epithelial barrier integrity: secreted by myeloid cells and promotes intestinal epithelial cells proliferation and survival. Also mediates osteoclast-endothelial cell crosstalk in growing bone: produced by osteoclasts and protects the neighboring vascular cells against senescence by promoting rRNA transcription. This Miopithecus talapoin (Angolan talapoin) protein is Angiogenin (ANG).